We begin with the raw amino-acid sequence, 367 residues long: Cytochrome b (367 aa).

A run of 4 helical transmembrane segments spans residues 20 to 40, 64 to 85, 101 to 121, and 166 to 186; these read MGSILGMILGLQLLTGILLSM, WFLRLLHANGASLFFLFMYAHI, WMVGVTIFLVSMATAFLGYVL, and FFSLHFLLPFLISGLALLHII. Heme b is bound by residues His-70 and His-84. Heme b contacts are provided by His-170 and His-184. His-189 is a binding site for a ubiquinone. 4 helical membrane passes run 214–234, 276–296, 308–328, and 335–355; these read IKDSVGFLMVFGVLLMITFFS, LGGVVALLMSILILYFLPLSS, IYQVLFWILVVTFIILTWLGA, and YLSLAGPLTLLYFLMFLLLGM.

Belongs to the cytochrome b family. As to quaternary structure, the main subunits of complex b-c1 are: cytochrome b, cytochrome c1 and the Rieske protein. The cofactor is heme b.

The protein localises to the mitochondrion inner membrane. In terms of biological role, component of the ubiquinol-cytochrome c reductase complex (complex III or cytochrome b-c1 complex) that is part of the mitochondrial respiratory chain. The b-c1 complex mediates electron transfer from ubiquinol to cytochrome c. Contributes to the generation of a proton gradient across the mitochondrial membrane that is then used for ATP synthesis. This Albinaria caerulea (Land snail) protein is Cytochrome b (MT-CYB).